Here is a 348-residue protein sequence, read N- to C-terminus: Sulfate/thiosulfate import ATP-binding protein CysA (348 aa).

In terms of domain architecture, ABC transporter spans 3–233 (ILIDNISKKF…PATPFVFSLL (231 aa)). Position 35–42 (35–42 (GPSGSGKS)) interacts with ATP.

This sequence belongs to the ABC transporter superfamily. Sulfate/tungstate importer (TC 3.A.1.6) family.

The protein resides in the plastid. The protein localises to the chloroplast. The enzyme catalyses sulfate(out) + ATP + H2O = sulfate(in) + ADP + phosphate + H(+). It carries out the reaction thiosulfate(out) + ATP + H2O = thiosulfate(in) + ADP + phosphate + H(+). Part of the ABC transporter complex involved in sulfate/thiosulfate import. Responsible for energy coupling to the transport system. The chain is Sulfate/thiosulfate import ATP-binding protein CysA from Mesostigma viride (Green alga).